The following is a 207-amino-acid chain: Large ribosomal subunit protein uL4 (207 aa).

Residues 48 to 86 (THKVKNRSEVRGGGRKPWRQKGTGRARQGSIRSPQWRGG) form a disordered region. Basic residues predominate over residues 60-71 (GGRKPWRQKGTG).

It belongs to the universal ribosomal protein uL4 family. Part of the 50S ribosomal subunit.

Functionally, one of the primary rRNA binding proteins, this protein initially binds near the 5'-end of the 23S rRNA. It is important during the early stages of 50S assembly. It makes multiple contacts with different domains of the 23S rRNA in the assembled 50S subunit and ribosome. Its function is as follows. Forms part of the polypeptide exit tunnel. This chain is Large ribosomal subunit protein uL4, found in Bacillus licheniformis (strain ATCC 14580 / DSM 13 / JCM 2505 / CCUG 7422 / NBRC 12200 / NCIMB 9375 / NCTC 10341 / NRRL NRS-1264 / Gibson 46).